The following is a 286-amino-acid chain: Prepilin leader peptidase/N-methyltransferase (286 aa).

Residues 10–30 (FAVPLAAVLGLLVGSFLNVVI) form a helical membrane-spanning segment. Zn(2+) contacts are provided by Cys-70, Cys-73, Cys-95, and Cys-98. Helical transmembrane passes span 102–122 (ISIR…LVAW), 126–146 (WSWI…LTFI), 157–177 (MTLP…FVPL), 181–201 (VLGA…YKLL), 224–244 (ISAL…AAIV), and 250–270 (GRHF…FTAN).

The protein belongs to the peptidase A24 family. Requires Zn(2+) as cofactor.

Its subcellular location is the cell inner membrane. The enzyme catalyses Typically cleaves a -Gly-|-Phe- bond to release an N-terminal, basic peptide of 5-8 residues from type IV prepilin, and then N-methylates the new N-terminal amino group, the methyl donor being S-adenosyl-L-methionine.. In terms of biological role, plays an essential role in type IV pili and type II pseudopili formation by proteolytically removing the leader sequence from substrate proteins and subsequently monomethylating the alpha-amino group of the newly exposed N-terminal phenylalanine. The polypeptide is Prepilin leader peptidase/N-methyltransferase (pilD) (Neisseria gonorrhoeae).